Here is a 967-residue protein sequence, read N- to C-terminus: MNNINKNSQKDRPTYKDTLNLLQTNFGMRANATLREPELQAFWREKNIDFELGLNNTGETFTLHDGPPYANGTLHMGHALNKVLKDIINKFQTMKGKKVCYVPGWDCHGLPIELKVLQAMDKSQRAELTPIKLRKKAAAYAKKQVSQQMDGFKRWGVWGDWDQPYLSLDKKFEASQIKLFGEMVFKGYIYRGLKPVHWSPSSQTALAEAELEYPTGHTSKSIYVGFKVNQIPKRLTQEISKQAPDLINSEGKLKEVKLVIWTTTPWTIPANEAISVNQKLEYVIAQSSDRSLIIIANDLLDEVSKSVGINYEKRVLIKGSILDGIIYKHPLFDKISPVVLGGDYITTESGTGLVHTAPGHGVDDFNTGKKYNLSISCTVDAKGFLTKEAGKYEGLNVLKDANSVIISDLINSGSLLKEIPYEHRYPYDWRTKKPTIFRATEQWFASVEGFRDKALSAIEDVIWLPESGKNRINSMVRERGDWCISRQRTWGVPIPVFYEKNGQEILLNKETISHIADLFSVHGADIWWEYEVSELLPPSYLNQADRWQKGTDTMDVWFDSGSSWSSVISKKENLNYPADLYLEGSDQHRGWFQSSLLTSVAVNEHAPFKKVLTHGFALDENGRKMSKSLGNIIDPLVIINGGSNKKLDPAYGADVLRLWVSSVDYSADVPIGSNILKQISDVYRKVRNTSRYLLGNLYDFDYKIDSIDIANLPLLDKWMLNRTAEVIDEISDAYNNFEFSKFFQTIQNFCVVDLSNFYLDIAKDRLYVSSKSDFRRRSCQTVLSLVIEKISGLIAPVLCHMAEDIWQNIPYDLEEASVFQRGWPNVPKSWRNSSFNCHVTELRKLRAVINRMLESCRNNQALGSSLEASVRVDISDEKVQAAIEWLAESESNNVDVLRDWFLVSSLQIGGEPWAEVLVSEDNDYASVEIAKARGFKCERCWHYEIEMSKNPQHTNICKRCEKVVLAI.

The 'HIGH' region signature appears at 68 to 78; that stretch reads PYANGTLHMGH. An L-isoleucyl-5'-AMP-binding site is contributed by Glu583. Residues 624–628 carry the 'KMSKS' region motif; the sequence is KMSKS. ATP is bound at residue Lys627. 4 residues coordinate Zn(2+): Cys937, Cys940, Cys957, and Cys960.

It belongs to the class-I aminoacyl-tRNA synthetase family. IleS type 1 subfamily. In terms of assembly, monomer. Zn(2+) is required as a cofactor.

The protein resides in the cytoplasm. The catalysed reaction is tRNA(Ile) + L-isoleucine + ATP = L-isoleucyl-tRNA(Ile) + AMP + diphosphate. Its function is as follows. Catalyzes the attachment of isoleucine to tRNA(Ile). As IleRS can inadvertently accommodate and process structurally similar amino acids such as valine, to avoid such errors it has two additional distinct tRNA(Ile)-dependent editing activities. One activity is designated as 'pretransfer' editing and involves the hydrolysis of activated Val-AMP. The other activity is designated 'posttransfer' editing and involves deacylation of mischarged Val-tRNA(Ile). The polypeptide is Isoleucine--tRNA ligase (Prochlorococcus marinus (strain NATL1A)).